Here is a 104-residue protein sequence, read N- to C-terminus: Large ribosomal subunit protein uL24 (104 aa).

This sequence belongs to the universal ribosomal protein uL24 family. Part of the 50S ribosomal subunit.

In terms of biological role, one of two assembly initiator proteins, it binds directly to the 5'-end of the 23S rRNA, where it nucleates assembly of the 50S subunit. One of the proteins that surrounds the polypeptide exit tunnel on the outside of the subunit. This chain is Large ribosomal subunit protein uL24, found in Shewanella loihica (strain ATCC BAA-1088 / PV-4).